The primary structure comprises 799 residues: Oxygen sensor protein DosP (799 aa).

The PAS 1 domain occupies 10-81; sequence ADGIFFPALE…YIRHNREGGK (72 aa). Residues His-69 and Met-87 each coordinate heme. Residues 134–207 form the PAS 2 domain; it reads QTRQLIIAVD…LQQLLWKTAR (74 aa). Residues 208–260 enclose the PAC domain; it reads DQDEFLLLTRTGEKIWIKASISPVYDVLAHLQNLVMTFSDITEERQIRQLEGN. Residues 402–532 enclose the GGDEF domain; sequence VSPVVYLIGV…GGNGWQFFSP (131 aa). Positions 541–795 constitute an EAL domain; the sequence is RLVLGAALKE…EIPGWMSSVL (255 aa).

Homodimer; has been previously suggested to be a homotetramer based on size exclusion chromatography. Forms a complex with DosC. Heme is required as a cofactor. It depends on Mg(2+) as a cofactor. In terms of processing, the heme distal ligand is coordinated by Met-87 in the active Fe(2+) (ferrous) form, by O(2) in the O(2)-bound form and by H(2)O in the inactive Fe(3+) (ferric) form.

The enzyme catalyses 3',3'-c-di-GMP + H2O = 5'-phosphoguanylyl(3'-&gt;5')guanosine + H(+). Its activity is regulated as follows. Has c-di-GMP PDE activity in both Fe(2+) and Fe(3+)-bound forms; this activity is increased 6-7 fold by binding of O(2) and CO and NO. Has cAMP PDE activity only when the heme is in the Fe(2+) form. cAMP PDE activity is inhibited by oxidation of the heme iron and by binding of external ligands such as CO and NO. Also strongly inhibited by etazolate hydrochloride, a selective cAMP PDE inhibitor. PDE activity is inhibited in the absence of oxygen. In terms of biological role, heme-based oxygen sensor protein displaying phosphodiesterase (PDE) activity toward c-di-GMP in response to oxygen availability. Involved in the modulation of intracellular c-di-GMP levels, in association with DosC which catalyzes the biosynthesis of c-di-GMP (diguanylate cyclase activity). Cyclic-di-GMP is a second messenger which controls cell surface-associated traits in bacteria. Has very poor PDE activity on cAMP but is not active with cGMP, bis(p-nitrophenyl) phosphate or p-nitrophenyl phosphate. Via its PDE activity on c-di-GMP, DosP regulates biofilm formation through the repression of transcription of the csgBAC operon, which encodes curli structural subunits. The polypeptide is Oxygen sensor protein DosP (dosP) (Escherichia coli (strain K12)).